An 814-amino-acid chain; its full sequence is MANEAHNIEHTDPEFRDDSADARTLPLLPVRDTVLFPHAVLPLTVGRESSVQLINSLGEDKTIVVVAQREARVDSPQPSDLFAIGSLAVVHKVVKMPNQSLFVFAEGLERVRVTEYVQLNPYMRATVETVPEAFPPKSAEIEALQRNVLTLFQQIVTGSPTLSDELSTVAMNIEEPGRLVDFVASSLPSLSTKDKQEILETADVQIRLDKINQHLAKELEVQQLRNKIQSEVQDRVQQTQREYYLREQLKAIQKELGEQDDSTRDADELREKVEAAGMPDDVKKEALKELGRLARMSPMAADYSVTRNYIEWLAVLPWQKSSGAGEIDIPKAKDILDEDHYDLQKVKDRILDYLSVRRLKPNMKGPILCFSGPPGVGKTSLGKSIARALGRKFVRISLGGVHDEAEIRGHRRTYIGALPGQIMQGIRRAETNDPVFMLDEIDKVGRDFRGDPSAALLEALDPEQNNSFRDNYLDVPFDLSKVLFITTANQLDPIPEPLRDRMEIIDLQGYSEEEKVHIAFRYLIPRQEEENGITKDMIEFSEEAVRRIIRHYTREAGVRNLERNIGTVCRKLARRIAEGKTEKLAVTPQTITEMLGGEKVRVDTEIAERTKRAGVVVGLAWTPAGGDILFVEATTMKGKGGFTMTGQLGDVMRESMQAALSWVKSNAGKLGIDEEFFEKHDIHIHVPAGAIPKDGPSAGVTMVTALVSLLTDKPLRPLTAMTGEITLSGNVLPIGGVKEKTLAAKRAGVKTIILPSENKMNMDEDLTPEQLQGIEVHYVKTIDEVLEIALPSNKAEEKQDARTRAEVLNEVPAV.

The tract at residues 1 to 20 (MANEAHNIEHTDPEFRDDSA) is disordered. Residues 25–219 (LPLLPVRDTV…KINQHLAKEL (195 aa)) enclose the Lon N-terminal domain. 372 to 379 (GPPGVGKT) contacts ATP. The Lon proteolytic domain maps to 610–792 (TKRAGVVVGL…DEVLEIALPS (183 aa)). Catalysis depends on residues serine 697 and lysine 740.

Belongs to the peptidase S16 family. Homohexamer. Organized in a ring with a central cavity.

The protein resides in the cytoplasm. The enzyme catalyses Hydrolysis of proteins in presence of ATP.. ATP-dependent serine protease that mediates the selective degradation of mutant and abnormal proteins as well as certain short-lived regulatory proteins. Required for cellular homeostasis and for survival from DNA damage and developmental changes induced by stress. Degrades polypeptides processively to yield small peptide fragments that are 5 to 10 amino acids long. Binds to DNA in a double-stranded, site-specific manner. This is Lon protease from Koribacter versatilis (strain Ellin345).